A 366-amino-acid chain; its full sequence is tRNA 2-selenouridine synthase (366 aa).

In terms of domain architecture, Rhodanese spans 14-137 (LLENRPLIDV…IRSFLINTIE (124 aa)). The S-selanylcysteine intermediate role is filled by C97.

It belongs to the SelU family. Monomer.

The catalysed reaction is 5-methylaminomethyl-2-thiouridine(34) in tRNA + selenophosphate + (2E)-geranyl diphosphate + H2O + H(+) = 5-methylaminomethyl-2-selenouridine(34) in tRNA + (2E)-thiogeraniol + phosphate + diphosphate. The enzyme catalyses 5-methylaminomethyl-2-thiouridine(34) in tRNA + (2E)-geranyl diphosphate = 5-methylaminomethyl-S-(2E)-geranyl-thiouridine(34) in tRNA + diphosphate. It catalyses the reaction 5-methylaminomethyl-S-(2E)-geranyl-thiouridine(34) in tRNA + selenophosphate + H(+) = 5-methylaminomethyl-2-(Se-phospho)selenouridine(34) in tRNA + (2E)-thiogeraniol. It carries out the reaction 5-methylaminomethyl-2-(Se-phospho)selenouridine(34) in tRNA + H2O = 5-methylaminomethyl-2-selenouridine(34) in tRNA + phosphate. Involved in the post-transcriptional modification of the uridine at the wobble position (U34) of tRNA(Lys), tRNA(Glu) and tRNA(Gln). Catalyzes the conversion of 2-thiouridine (S2U-RNA) to 2-selenouridine (Se2U-RNA). Acts in a two-step process involving geranylation of 2-thiouridine (S2U) to S-geranyl-2-thiouridine (geS2U) and subsequent selenation of the latter derivative to 2-selenouridine (Se2U) in the tRNA chain. This is tRNA 2-selenouridine synthase from Shewanella frigidimarina (strain NCIMB 400).